The chain runs to 331 residues: Glyceraldehyde-3-phosphate dehydrogenase, cytosolic (331 aa).

Residues 12-13, Asp34, and Arg78 each bind NAD(+); that span reads RI. D-glyceraldehyde 3-phosphate is bound by residues 149–151, Thr180, 209–210, and Arg232; these read SCT and TG. Cys150 (nucleophile) is an active-site residue. Position 314 (Asn314) interacts with NAD(+).

It belongs to the glyceraldehyde-3-phosphate dehydrogenase family. As to quaternary structure, homotetramer.

It localises to the cytoplasm. The catalysed reaction is D-glyceraldehyde 3-phosphate + phosphate + NAD(+) = (2R)-3-phospho-glyceroyl phosphate + NADH + H(+). The protein operates within carbohydrate degradation; glycolysis; pyruvate from D-glyceraldehyde 3-phosphate: step 1/5. The polypeptide is Glyceraldehyde-3-phosphate dehydrogenase, cytosolic (Trypanosoma brucei brucei).